A 305-amino-acid polypeptide reads, in one-letter code: Ribonuclease BN (305 aa).

Residues His64, His66, Asp68, His69, His141, Asp212, and His270 each contribute to the Zn(2+) site. Asp68 acts as the Proton acceptor in catalysis.

Belongs to the RNase Z family. RNase BN subfamily. In terms of assembly, homodimer. Zn(2+) is required as a cofactor.

Functionally, zinc phosphodiesterase, which has both exoribonuclease and endoribonuclease activities. This chain is Ribonuclease BN, found in Escherichia coli O139:H28 (strain E24377A / ETEC).